A 191-amino-acid polypeptide reads, in one-letter code: Cell division protein SepF (191 aa).

Positions 151 to 165 (SSSPEEASPSSVPTE) are enriched in low complexity. The interval 151–191 (SSSPEEASPSSVPTENTPQYSLGKNTTPEPAWGNSKLSAYS) is disordered. Residues 166–178 (NTPQYSLGKNTTP) are compositionally biased toward polar residues.

Belongs to the SepF family. Homodimer. Interacts with FtsZ.

It is found in the cytoplasm. Functionally, cell division protein that is part of the divisome complex and is recruited early to the Z-ring. Probably stimulates Z-ring formation, perhaps through the cross-linking of FtsZ protofilaments. Its function overlaps with FtsA. This chain is Cell division protein SepF, found in Prochlorococcus marinus (strain MIT 9215).